Reading from the N-terminus, the 268-residue chain is Small ribosomal subunit protein uS3 (268 aa).

A KH type-2 domain is found at 40–110 (IRNLFFINYR…KLDLTINEIG (71 aa)).

It belongs to the universal ribosomal protein uS3 family. As to quaternary structure, part of the 30S ribosomal subunit. Forms a tight complex with proteins S10 and S14.

In terms of biological role, binds the lower part of the 30S subunit head. Binds mRNA in the 70S ribosome, positioning it for translation. In Mycoplasma genitalium (strain ATCC 33530 / DSM 19775 / NCTC 10195 / G37) (Mycoplasmoides genitalium), this protein is Small ribosomal subunit protein uS3.